Consider the following 515-residue polypeptide: 2-isopropylmalate synthase (515 aa).

One can recognise a Pyruvate carboxyltransferase domain in the interval 5 to 267 (VIIFDTTLRD…HTGLDHKEIH (263 aa)). Mn(2+) contacts are provided by D14, H202, H204, and N238. The segment at 392 to 515 (KLNYLSVQSG…EMKQQKFATV (124 aa)) is regulatory domain.

This sequence belongs to the alpha-IPM synthase/homocitrate synthase family. LeuA type 1 subfamily. In terms of assembly, homodimer. It depends on Mn(2+) as a cofactor.

The protein resides in the cytoplasm. It carries out the reaction 3-methyl-2-oxobutanoate + acetyl-CoA + H2O = (2S)-2-isopropylmalate + CoA + H(+). Its pathway is amino-acid biosynthesis; L-leucine biosynthesis; L-leucine from 3-methyl-2-oxobutanoate: step 1/4. Functionally, catalyzes the condensation of the acetyl group of acetyl-CoA with 3-methyl-2-oxobutanoate (2-ketoisovalerate) to form 3-carboxy-3-hydroxy-4-methylpentanoate (2-isopropylmalate). In Vibrio atlanticus (strain LGP32) (Vibrio splendidus (strain Mel32)), this protein is 2-isopropylmalate synthase.